Consider the following 1648-residue polypeptide: Kinesin-like protein KIF14 (1648 aa).

Residues 1 to 27 (MSLHSTHNRNNSGDILDIPSSQNSSSL) form a disordered region. Positions 1–356 (MSLHSTHNRN…AGKDPLKVEN (356 aa)) are required for PRC1-binding. A phosphoserine mark is found at S12 and S272. A Phosphothreonine modification is found at T277. A Phosphoserine modification is found at S346. The tract at residues 356-737 (NSQVTVAVRV…AAQRNSRNID (382 aa)) is required for microtubule-binding with high affinity. One can recognise a Kinesin motor domain in the interval 358–701 (QVTVAVRVRP…LRYANQARLI (344 aa)). 447-454 (GQTGSGKS) is a binding site for ATP. Positions 705–791 (AKVNEDMNAK…QETKELQKAG (87 aa)) form a coiled coil. The 67-residue stretch at 825 to 891 (TTVGKYKPNS…LRHGDRVILG (67 aa)) folds into the FHA domain. The segment at 901–1648 (PVEVQKGKRP…ECTPSRIQWV (748 aa)) is required for CIT-binding. Phosphothreonine is present on T915. The stretch at 922-1079 (KDFEFAKNEL…QNRNNRDKTF (158 aa)) forms a coiled coil. A phosphoserine mark is found at S937 and S1292. 2 coiled-coil regions span residues 1332 to 1348 (TNIARLEDELRQEVKKL) and 1468 to 1500 (ENIFAESKIKSFRRQVQEENFEYQDFKRMVNRA). The disordered stretch occupies residues 1600-1648 (NTKEEHQQSKSSGIDGSKNKGVPKRVYELHGSSPAVSSEECTPSRIQWV). Positions 1633–1648 (PAVSSEECTPSRIQWV) are enriched in polar residues.

The protein belongs to the TRAFAC class myosin-kinesin ATPase superfamily. Kinesin family. Directly interacts with PRC1 within a complex also containing KIF4A, KIF20A and KIF23; targets to the central spindle. Directly interacts with CIT depending on the activation state of the kinase (stronger interaction with the kinase-dead form); targets to the midbody. Interacts with ARRB2; the interaction is detected in the nucleus upon OR1D2 stimulation. Interacts with AKT1; the interaction is detected in the plasma membrane upon INS stimulation and promotes AKT1 phosphorylation. Interacts with SVIL; at midbody during cytokinesis. Interacts with RADIL (via PDZ domain); recruits RADIL to the microtubule network restricting RADIL from interaction with activated RAP1A.

The protein localises to the nucleus. It is found in the cytoplasm. The protein resides in the cytoskeleton. Its subcellular location is the spindle. It localises to the midbody. Functionally, microtubule motor protein that binds to microtubules with high affinity through each tubulin heterodimer and has an ATPase activity. Plays a role in many processes like cell division, cytokinesis and also in cell proliferation and apoptosis. During cytokinesis, targets to central spindle and midbody through its interaction with PRC1 and CIT respectively. Regulates cell growth through regulation of cell cycle progression and cytokinesis. During cell cycle progression acts through SCF-dependent proteasomal ubiquitin-dependent protein catabolic process which controls CDKN1B degradation, resulting in positive regulation of cyclins, including CCNE1, CCND1 and CCNB1. During late neurogenesis, regulates the cerebellar, cerebral cortex and olfactory bulb development through regulation of apoptosis, cell proliferation and cell division. Also is required for chromosome congression and alignment during mitotic cell cycle process. Regulates cell spreading, focal adhesion dynamics, and cell migration through its interaction with RADIL resulting in regulation of RAP1A-mediated inside-out integrin activation by tethering RADIL on microtubules. In Homo sapiens (Human), this protein is Kinesin-like protein KIF14.